The sequence spans 1222 residues: MLEYYDDDAYVYDDDDEDAPITAEDSWTVISAFFREKGLVSQQLDSFNQFINYTIQDLILEDSTLILEQLAQHTTEADNISRKYEISFGKIYLAKPSMTESDGVSHAMYPQEARLRNLTYASGLFVEIKKRTYEAVDIPGRDLKYEIIQEESEDTEEGKIFIGRVPIMLRSKYCLLDDLSESDLYRLKECPFDMGGYFIINGSEKVLIAQERSAGNIVQVFKKSAPSPISHIAEIRSALEKGSRFISTLQVKLYGREGSTSRTIKATLPYIKQDIPIVIIFRALGIIPDGEILEHICYDQNDWQMLEMLKPCVEEGFVIQDRETALDFIGRRGTALGIKKEKRIQYAKDILQKEFLPHITQLEGFESRKAFFLGYMINRLLLCALDRKDQDDRDHFGKKRLDLAGPLLAQLFKTLFRKLTRDILRFMQRSVEEAKDFNLKLAVKATTITAGLKYALATGNWGEQKKAMSSRAGVSQVLNRYTYSSTLSHLRRTNTPIGRDGKLAKPRQLHNTHWGLVCPAETPEGQACGLVKNLSLMSCISVGTDPVPIITFLNEWGMEPLEDYVPHQSPDATRVFVNGVWHGIHRNPARLVDTIRKLRRKGDITAEVSIVRDIREKELKIFTDAGRVYRPLFVVADTQHADGHKDLKVRKGHIRKLMLTEYQDIEGGFEDEDINYTWTSLLNDGIVEYIDAEEEETILIAMQQEDLDPSVPQTVDPSDELDPARRIKAIHHSNTFTHCEIHPSMILGVAASVIPFPDHNQSPRNTYQSAMGKQAMGVFLTNYNVRMDTMANILYYPQKPLGTTRAMEYLKFRELPAGQNAIVAIACYSGYNQEDSMIMNQSSIDSGLFRSLFFRSYMDQEKRIGMSITESFEKPHRTNTLRMKHGTYEKLDDDGLIAPGVRVSGDDIIIGKTTPIPPDAEELGQRTAFHSKRDASTPLRSTENGIVDQVLITTNQEGLKFVKVRVRTTKVPQIGDKFASRHGQKGTIGITYRREDMPFTAEGVVPDLIINPHAIPSRMTVAHLIECLLSKVAALSGNEGDASPFTDITVDGISKLLREHGYQSRGFEVMYNGHTGKKLMAQIFFGPTYYQRLRHMVDDKIHARARGPMQVLTRQPVEGRSRDGGLRFGEMERDCMIAHGAAAFLKERLMEASDAFRVHICGICGLMTVVAKLKHNQFECRGCKNKIDIYQVHIPYAAKLLFQELMAMNIAPRLYTDRSRDF.

Residue Asp835 coordinates Mg(2+). Zn(2+) is bound by residues Cys1161, Cys1164, Cys1180, and Cys1183. The C4-type zinc-finger motif lies at 1161-1183; it reads CGICGLMTVVAKLKHNQFECRGC.

The protein belongs to the RNA polymerase beta chain family. Component of the RNA polymerase II (Pol II) complex consisting of 12 subunits.

Its subcellular location is the nucleus. The enzyme catalyses RNA(n) + a ribonucleoside 5'-triphosphate = RNA(n+1) + diphosphate. In terms of biological role, DNA-dependent RNA polymerase catalyzes the transcription of DNA into RNA using the four ribonucleoside triphosphates as substrates. Second largest component of RNA polymerase II which synthesizes mRNA precursors and many functional non-coding RNAs. Proposed to contribute to the polymerase catalytic activity and forms the polymerase active center together with the largest subunit. Pol II is the central component of the basal RNA polymerase II transcription machinery. It is composed of mobile elements that move relative to each other. RPB2 is part of the core element with the central large cleft, the clamp element that moves to open and close the cleft and the jaws that are thought to grab the incoming DNA template. This chain is DNA-directed RNA polymerase II subunit RPB2 (RPB2), found in Eremothecium gossypii (strain ATCC 10895 / CBS 109.51 / FGSC 9923 / NRRL Y-1056) (Yeast).